Here is a 680-residue protein sequence, read N- to C-terminus: Protein FAR1-RELATED SEQUENCE 11 (680 aa).

Residues 1–36 form a disordered region; it reads MSDDPGQMLLIYDDPSDQRSLSLDDASSTEESPDDN. In terms of domain architecture, FAR1 spans 62-156; sequence EFYSTFAKRC…ANHHNHELLE (95 aa). An MULE domain is found at 277 to 373; it reads AVVFDTTHRL…CIWMVVGKFP (97 aa). The SWIM-type zinc finger occupies 556-589; that stretch reads YWVPQEGIISCSCQLFEFSGFLCRHALRVLSTGN.

The protein belongs to the FHY3/FAR1 family. In terms of tissue distribution, expressed in hypocotyls, rosette and cauline leaves, inflorescences stems, flowers and siliques.

The protein localises to the nucleus. In terms of biological role, putative transcription activator involved in regulating light control of development. This chain is Protein FAR1-RELATED SEQUENCE 11 (FRS11), found in Arabidopsis thaliana (Mouse-ear cress).